The sequence spans 172 residues: MPGIVELPSLEDLKVQEVKVSSSVLKAAAHHYGAQCDKPNKEFMLCRWEEKDPRRCLEEGKLVNQCALEFFRQIKRHCAEPFTEYWTCIDYSGLQLFRRCRKQQAQFDECVLDKLGWVRPDLGDLSKVTKVKTDRPLPENPYHSRARPEPNPEVEGDLKPARHGSRLFFWTM.

CHCH domains are found at residues 33 to 74 (GAQC…FRQI) and 75 to 118 (KRHC…LGWV). 4 short sequence motifs (cx9C motif) span residues 36–46 (CDKPNKEFMLC), 56–66 (CLEEGKLVNQC), 78–88 (CAEPFTEYWTC), and 100–110 (CRKQQAQFDEC). Disulfide bonds link cysteine 36-cysteine 66, cysteine 46-cysteine 56, cysteine 78-cysteine 110, and cysteine 88-cysteine 100. Residues 133-159 (TDRPLPENPYHSRARPEPNPEVEGDLK) form a disordered region. Positions 146–159 (ARPEPNPEVEGDLK) are enriched in basic and acidic residues.

Belongs to the complex I NDUFA8 subunit family. As to quaternary structure, complex I is composed of 45 different subunits.

The protein localises to the mitochondrion inner membrane. The protein resides in the mitochondrion intermembrane space. It localises to the mitochondrion. In terms of biological role, accessory subunit of the mitochondrial membrane respiratory chain NADH dehydrogenase (Complex I), that is believed not to be involved in catalysis. Complex I functions in the transfer of electrons from NADH to the respiratory chain. The immediate electron acceptor for the enzyme is believed to be ubiquinone. This chain is NADH dehydrogenase [ubiquinone] 1 alpha subcomplex subunit 8 (NDUFA8), found in Bos taurus (Bovine).